Here is a 425-residue protein sequence, read N- to C-terminus: MDHATRAHFTMTVGEVDPLLADALASERGRQQNQIELIASENIVSRAVLDALGHEITNKTLEGYPGNRFHGGGQFVDIAEQAAIDRAKQLFNCGYANVQPHSGTQANLAVFFLLLKPGEKVLSLDLAAGGHLSHGMKANLSGRWFDATNYNVNPQNEVIDLDEMERLAEEIRPKLLITGGSAYPRELDFERMSRIAKKVGAYFLVDMAHIAGLVAGGVHPSPFPHADIVTCTTTKTLRGPRGGLILTNNEEWYKKLQAAVFPGVQGSLHSNVLAAKAICLGEAMLDDFKVYARQVVANAKVLANTLAERGVRIVSGGTDTHIVLLDLASKGLLGKQAETLLAKANITSNKNPIPGDSPRPPEWVGMRLGSSAATTRGLKEAEFRVLGTVIADLIDAEVAGKADDVVEGAKAKIAELTNTFPVYGQ.

(6S)-5,6,7,8-tetrahydrofolate is bound by residues Leu126 and 130 to 132; that span reads GHL. Position 235 is an N6-(pyridoxal phosphate)lysine (Lys235). Glu251 provides a ligand contact to (6S)-5,6,7,8-tetrahydrofolate.

Belongs to the SHMT family. In terms of assembly, homodimer. It depends on pyridoxal 5'-phosphate as a cofactor.

The protein resides in the cytoplasm. The enzyme catalyses (6R)-5,10-methylene-5,6,7,8-tetrahydrofolate + D-alanine + H2O = 2-methylserine + (6S)-5,6,7,8-tetrahydrofolate. Its pathway is one-carbon metabolism; tetrahydrofolate interconversion. Functionally, catalyzes the reversible interconversion of alpha-methyl-L-serine to D-alanine with tetrahydrofolate (THF) serving as the one-carbon carrier. Cannot use alpha-methyl-D-serine, L-serine, D-serine or L-alanine. This chain is 2-methylserine hydroxymethyltransferase, found in Ensifer sp.